The following is a 1177-amino-acid chain: Lysylphosphatidylglycerol biosynthesis bifunctional protein LysX (1177 aa).

Disordered stretches follow at residues 1–40 (MRRA…AKFV) and 61–85 (VTLA…PANR). The interval 1 to 676 (MRRAGRSRQF…LLHHDGSAPD (676 aa)) is phosphatidylglycerol lysyltransferase. Polar residues predominate over residues 8–21 (RQFSSVEEAFSTSA). Positions 65–82 (SPGSRSGSGPRSGPRLGP) are enriched in low complexity. A run of 6 helical transmembrane segments spans residues 93-113 (VPAA…LGSV), 135-155 (FPDT…ALTA), 159-179 (IAWL…VADI), 189-209 (IFGE…LVLA), 227-247 (AVLV…VELF), and 281-301 (VFLN…ATIV). The tract at residues 673 to 693 (SAPDVSGLRPERTDAEEARSR) is disordered. The interval 677 to 1177 (VSGLRPERTD…TLPFPLAKPH (501 aa)) is lysine--tRNA ligase. Residues 681 to 693 (RPERTDAEEARSR) are compositionally biased toward basic and acidic residues. Residues Asp-1089 and Glu-1096 each coordinate Mg(2+).

The protein in the N-terminal section; belongs to the LPG synthetase family. In the C-terminal section; belongs to the class-II aminoacyl-tRNA synthetase family. Requires Mg(2+) as cofactor.

The protein localises to the cell membrane. The catalysed reaction is tRNA(Lys) + L-lysine + ATP = L-lysyl-tRNA(Lys) + AMP + diphosphate. It catalyses the reaction L-lysyl-tRNA(Lys) + a 1,2-diacyl-sn-glycero-3-phospho-(1'-sn-glycerol) = a 1,2-diacyl-sn-glycero-3-phospho-1'-(3'-O-L-lysyl)-sn-glycerol + tRNA(Lys). Catalyzes the production of L-lysyl-tRNA(Lys)transfer and the transfer of a lysyl group from L-lysyl-tRNA(Lys) to membrane-bound phosphatidylglycerol (PG), which produces lysylphosphatidylglycerol (LPG), one of the components of the bacterial membrane with a positive net charge. LPG synthesis contributes to the resistance to cationic antimicrobial peptides (CAMPs) and likely protects M.tuberculosis against the CAMPs produced by competiting microorganisms (bacteriocins). In fact, the modification of anionic phosphatidylglycerol with positively charged L-lysine results in repulsion of the peptides. In Mycobacterium avium (strain 104), this protein is Lysylphosphatidylglycerol biosynthesis bifunctional protein LysX (lysX).